The sequence spans 216 residues: Large ribosomal subunit protein uL3 (216 aa).

Q153 bears the N5-methylglutamine mark.

This sequence belongs to the universal ribosomal protein uL3 family. As to quaternary structure, part of the 50S ribosomal subunit. Forms a cluster with proteins L14 and L19. Methylated by PrmB.

Its function is as follows. One of the primary rRNA binding proteins, it binds directly near the 3'-end of the 23S rRNA, where it nucleates assembly of the 50S subunit. The sequence is that of Large ribosomal subunit protein uL3 from Burkholderia ambifaria (strain MC40-6).